A 736-amino-acid polypeptide reads, in one-letter code: Catalase-peroxidase 2 (736 aa).

Positions 1–23 (MIKKTLPVLILLALSGSFSTAVA) are cleaved as a signal peptide. A cross-link (tryptophyl-tyrosyl-methioninium (Trp-Tyr) (with M-249)) is located at residues 102–223 (WHGAGTYRTY…LAATQMGLIY (122 aa)). The active-site Proton acceptor is the histidine 103. Residues 223–249 (YVNPEGPGGKPDPLASAKDIREAFSRM) constitute a cross-link (tryptophyl-tyrosyl-methioninium (Tyr-Met) (with W-102)). Histidine 264 is a binding site for heme b.

It belongs to the peroxidase family. Peroxidase/catalase subfamily. As to quaternary structure, homodimer or homotetramer. It depends on heme b as a cofactor. In terms of processing, formation of the three residue Trp-Tyr-Met cross-link is important for the catalase, but not the peroxidase activity of the enzyme.

Its subcellular location is the periplasm. The catalysed reaction is H2O2 + AH2 = A + 2 H2O. It carries out the reaction 2 H2O2 = O2 + 2 H2O. Its function is as follows. Bifunctional enzyme with both catalase and broad-spectrum peroxidase activity. The protein is Catalase-peroxidase 2 of Escherichia coli O157:H7.